We begin with the raw amino-acid sequence, 425 residues long: Histidine--tRNA ligase (425 aa).

It belongs to the class-II aminoacyl-tRNA synthetase family. Homodimer.

The protein resides in the cytoplasm. It carries out the reaction tRNA(His) + L-histidine + ATP = L-histidyl-tRNA(His) + AMP + diphosphate + H(+). In Desulforapulum autotrophicum (strain ATCC 43914 / DSM 3382 / VKM B-1955 / HRM2) (Desulfobacterium autotrophicum), this protein is Histidine--tRNA ligase.